Consider the following 42-residue polypeptide: Thymosin beta-10 (42 aa).

Basic and acidic residues-rich tracts occupy residues 1-25 (MADK…ETQE) and 33-42 (ETIEQEKQAK). The disordered stretch occupies residues 1 to 42 (MADKPDMGEINSFDKAKLKKTETQEKNTLPTKETIEQEKQAK). At A2 the chain carries N-acetylalanine. K4 is modified (N6-acetyllysine). Residue S12 is modified to Phosphoserine. An N6-acetyllysine modification is found at K15. Residues T21, T23, and T34 each carry the phosphothreonine modification. K39 is modified (N6-acetyllysine).

It belongs to the thymosin beta family.

It is found in the cytoplasm. The protein resides in the cytoskeleton. In terms of biological role, plays an important role in the organization of the cytoskeleton. Binds to and sequesters actin monomers (G actin) and therefore inhibits actin polymerization. This is Thymosin beta-10 (TMSB10) from Sus scrofa (Pig).